The sequence spans 339 residues: Phosphate acyltransferase (339 aa).

It belongs to the PlsX family. As to quaternary structure, homodimer. Probably interacts with PlsY.

Its subcellular location is the cytoplasm. The enzyme catalyses a fatty acyl-[ACP] + phosphate = an acyl phosphate + holo-[ACP]. The protein operates within lipid metabolism; phospholipid metabolism. Catalyzes the reversible formation of acyl-phosphate (acyl-PO(4)) from acyl-[acyl-carrier-protein] (acyl-ACP). This enzyme utilizes acyl-ACP as fatty acyl donor, but not acyl-CoA. This is Phosphate acyltransferase from Moorella thermoacetica (strain ATCC 39073 / JCM 9320).